A 63-amino-acid polypeptide reads, in one-letter code: Small ribosomal subunit protein bS21 (63 aa).

It belongs to the bacterial ribosomal protein bS21 family.

The protein is Small ribosomal subunit protein bS21 of Bacteroides fragilis (strain ATCC 25285 / DSM 2151 / CCUG 4856 / JCM 11019 / LMG 10263 / NCTC 9343 / Onslow / VPI 2553 / EN-2).